The following is a 194-amino-acid chain: Orotate phosphoribosyltransferase (194 aa).

117–125 (EDVVTTGLS) is a binding site for 5-phospho-alpha-D-ribose 1-diphosphate. Orotate-binding residues include Thr-121 and Arg-149.

This sequence belongs to the purine/pyrimidine phosphoribosyltransferase family. PyrE subfamily. In terms of assembly, homodimer. Requires Mg(2+) as cofactor.

It catalyses the reaction orotidine 5'-phosphate + diphosphate = orotate + 5-phospho-alpha-D-ribose 1-diphosphate. The protein operates within pyrimidine metabolism; UMP biosynthesis via de novo pathway; UMP from orotate: step 1/2. Its function is as follows. Catalyzes the transfer of a ribosyl phosphate group from 5-phosphoribose 1-diphosphate to orotate, leading to the formation of orotidine monophosphate (OMP). This is Orotate phosphoribosyltransferase from Novosphingobium aromaticivorans (strain ATCC 700278 / DSM 12444 / CCUG 56034 / CIP 105152 / NBRC 16084 / F199).